A 224-amino-acid chain; its full sequence is ATP-dependent dethiobiotin synthetase BioD (224 aa).

14 to 19 (GIGKTV) contributes to the ATP binding site. Thr-18 serves as a coordination point for Mg(2+). Residue Lys-39 is part of the active site. Substrate is bound at residue Ser-43. Residues Asp-56, 117 to 120 (EGVG), and 177 to 178 (NE) contribute to the ATP site. 2 residues coordinate Mg(2+): Asp-56 and Glu-117.

It belongs to the dethiobiotin synthetase family. Homodimer. Requires Mg(2+) as cofactor.

It localises to the cytoplasm. The enzyme catalyses (7R,8S)-7,8-diammoniononanoate + CO2 + ATP = (4R,5S)-dethiobiotin + ADP + phosphate + 3 H(+). Its pathway is cofactor biosynthesis; biotin biosynthesis; biotin from 7,8-diaminononanoate: step 1/2. Catalyzes a mechanistically unusual reaction, the ATP-dependent insertion of CO2 between the N7 and N8 nitrogen atoms of 7,8-diaminopelargonic acid (DAPA, also called 7,8-diammoniononanoate) to form a ureido ring. The chain is ATP-dependent dethiobiotin synthetase BioD from Xanthomonas campestris pv. campestris (strain B100).